The following is a 418-amino-acid chain: D-inositol 3-phosphate glycosyltransferase (418 aa).

His9 is a binding site for 1D-myo-inositol 3-phosphate. UDP-N-acetyl-alpha-D-glucosamine contacts are provided by residues 15 to 16 and Gly23; that span reads QP. Residues 20-25, Lys78, Tyr110, Thr134, and Arg154 each bind 1D-myo-inositol 3-phosphate; that span reads DSGGMN. Arg231, Lys236, and Arg294 together coordinate UDP-N-acetyl-alpha-D-glucosamine. Mg(2+) contacts are provided by Tyr303, Arg304, and Ala306. Positions 316 and 324 each coordinate UDP-N-acetyl-alpha-D-glucosamine. Thr330 contributes to the Mg(2+) binding site.

Belongs to the glycosyltransferase group 1 family. MshA subfamily. As to quaternary structure, homodimer.

The catalysed reaction is 1D-myo-inositol 3-phosphate + UDP-N-acetyl-alpha-D-glucosamine = 1D-myo-inositol 2-acetamido-2-deoxy-alpha-D-glucopyranoside 3-phosphate + UDP + H(+). In terms of biological role, catalyzes the transfer of a N-acetyl-glucosamine moiety to 1D-myo-inositol 3-phosphate to produce 1D-myo-inositol 2-acetamido-2-deoxy-glucopyranoside 3-phosphate in the mycothiol biosynthesis pathway. The polypeptide is D-inositol 3-phosphate glycosyltransferase (Corynebacterium glutamicum (strain R)).